Consider the following 271-residue polypeptide: Intercellular adhesion molecule 4 (271 aa).

Positions 1-22 are cleaved as a signal peptide; it reads MGSLFPLSLLFFLAAAYPGVGS. Topologically, residues 23–240 are extracellular; the sequence is ALGRRTKRAQ…MLAWSPAPTA (218 aa). Ig-like C2-type domains lie at 62 to 124 and 146 to 217; these read GKSV…TRWA and GRKY…LNLD. Asn68, Asn78, Asn190, and Asn223 each carry an N-linked (GlcNAc...) asparagine glycan. Cystine bridges form between Cys69/Cys113, Cys69/Cys117, Cys73/Cys117, and Cys153/Cys210. Residues 241-261 traverse the membrane as a helical segment; the sequence is LASGSIAALVGILLTVGAAYL. Over 262-271 the chain is Cytoplasmic; sequence CKCLAMKSQA.

Belongs to the immunoglobulin superfamily. ICAM family. N- and O-glycosylated. In terms of tissue distribution, erythrocytes.

It is found in the cell membrane. Its subcellular location is the secreted. Functionally, ICAM proteins are ligands for the leukocyte adhesion protein LFA-1 (integrin alpha-L/beta-2). ICAM4 is also a ligand for alpha-4/beta-1 and alpha-V integrins. This Homo sapiens (Human) protein is Intercellular adhesion molecule 4 (ICAM4).